Consider the following 216-residue polypeptide: MFTKIFRAVIIGAPGSGKGTISELICKNHGCVHISTGDILRQNIIKNTELGKKAKQYIAEGKLVPDAIVTKTMLARITEVGNRSYILDGFPRNIAQAEALAAREQIDAVITLDVPHSVIIDRVKNRWIHAPSGRVYNIGFKNPKVPGKDDVTGEPLMQREDDKPHVVAKRLELYDEVMSPVIAWYEKKGLVATFKGKQTKEIWPMMELFLNDRINA.

15–20 (GSGKGT) is a GTP binding site. The NMPbind stretch occupies residues 35 to 64 (STGDILRQNIIKNTELGKKAKQYIAEGKLV). AMP-binding positions include Thr-36, Arg-41, 62–64 (KLV), 89–92 (GFPR), and Gln-96. Residues 125–162 (NRWIHAPSGRVYNIGFKNPKVPGKDDVTGEPLMQREDD) form an LID region. GTP is bound by residues Arg-126 and 135-136 (VY). AMP-binding residues include Arg-159 and Arg-170. Thr-199 lines the GTP pocket.

The protein belongs to the adenylate kinase family. AK3 subfamily. Monomer. In terms of tissue distribution, ubiquitously expressed with highest levels expressed in the abdomen, suggesting a function in muscle tissues.

The protein resides in the mitochondrion matrix. It catalyses the reaction a ribonucleoside 5'-triphosphate + AMP = a ribonucleoside 5'-diphosphate + ADP. Functionally, involved in maintaining the homeostasis of cellular nucleotides by catalyzing the interconversion of nucleoside phosphates. Has GTP:AMP phosphotransferase and ITP:AMP phosphotransferase activities. This chain is GTP:AMP phosphotransferase, mitochondrial, found in Drosophila melanogaster (Fruit fly).